Consider the following 497-residue polypeptide: Bloodstream-specific protein 2 (497 aa).

The first 14 residues, 1–14, serve as a signal peptide directing secretion; the sequence is MRAIFLVALALATM. In terms of domain architecture, Thioredoxin 1 spans 15–124; that stretch reads RESTAESLKL…IIKYIKANVG (110 aa). N-linked (GlcNAc...) asparagine glycosylation is present at Asn-30. Cys-48 and Cys-51 are joined by a disulfide. Residues Asn-63, Asn-85, Asn-153, Asn-154, Asn-250, and Asn-278 are each glycosylated (N-linked (GlcNAc...) asparagine). The region spanning 334 to 455 is the Thioredoxin 2 domain; that stretch reads EPTIKSLPVP…VYEFVRKHVT (122 aa). Residues Cys-378 and Cys-381 each act as nucleophile in the active site. Cys-378 and Cys-381 form a disulfide bridge. N-linked (GlcNAc...) asparagine glycosylation is found at Asn-413, Asn-465, Asn-476, Asn-482, Asn-485, and Asn-488. Positions 461–497 are disordered; sequence EKPANVTEEKKSEEENKSSKSNESNDSNESNVDKQDL. A compositionally biased stretch (basic and acidic residues) spans 467–480; it reads TEEKKSEEENKSSK. The segment covering 481-490 has biased composition (low complexity); that stretch reads SNESNDSNES.

It belongs to the protein disulfide isomerase family.

In Trypanosoma brucei brucei, this protein is Bloodstream-specific protein 2 (BS2).